The following is a 618-amino-acid chain: Crinkler effector protein 16 (618 aa).

The signal sequence occupies residues Met-1–Asp-19. The tract at residues Phe-18–Lys-57 is LQLFLAK domain. Positions Gln-58 to Ile-139 are DWL domain. The short motif at His-140–Pro-146 is the HVLVXXP motif element. Asn-534 carries N-linked (GlcNAc...) asparagine glycosylation.

Belongs to the Crinkler effector family.

It is found in the secreted. The protein resides in the host nucleus. In terms of biological role, secreted effector that elicits necrosis in host plants, a characteristic of plant innate immunity. This chain is Crinkler effector protein 16, found in Phytophthora infestans (Potato late blight agent).